Reading from the N-terminus, the 148-residue chain is MKIWVDADACPAVIKEILFKAARRTGVSMTLVANHLMRIPPSPHIHFMLVAAGLDAADNEIVKKLDAGDLVITADIPLAAQVIEKGGHALNPRGELYTVDNIRERLSMRDFMDSLRASGIDTGGPAALNQSDRQAFANRLDQFLTRHV.

Belongs to the UPF0178 family.

In Syntrophotalea carbinolica (strain DSM 2380 / NBRC 103641 / GraBd1) (Pelobacter carbinolicus), this protein is UPF0178 protein Pcar_2632.